A 247-amino-acid chain; its full sequence is MRYRAVVEYDGTAFIGWQRQKGVAGRSVQESIEDAIYRLSQQHVTVFAAGRTDAGVHALGQVVHFDLNTSLQDYVIKNALNHYLRSDMVSILSLEEAAEGFHARFSAKKRHYMYKIVNRDAPPCLDRLRMWHVPKQLNVSDMQEAASHMVGEKKDFASFRAKECQSKSSVRTVDRIDCVREGNNIFVHVSAKSFLHKQVRIIVGTLVQCGHGAFPPSYVLEILERKNRAAAGITAPPHGLYLVLVEY.

Asp-53 acts as the Nucleophile in catalysis. Tyr-112 serves as a coordination point for substrate.

The protein belongs to the tRNA pseudouridine synthase TruA family. Homodimer.

The enzyme catalyses uridine(38/39/40) in tRNA = pseudouridine(38/39/40) in tRNA. In terms of biological role, formation of pseudouridine at positions 38, 39 and 40 in the anticodon stem and loop of transfer RNAs. The chain is tRNA pseudouridine synthase A from Anaplasma marginale (strain Florida).